The primary structure comprises 383 residues: Chaperone protein DnaJ (383 aa).

Residues 5 to 70 (DYYEVLGVAK…EKRAAYDRFG (66 aa)) enclose the J domain. The CR-type zinc-finger motif lies at 139–217 (GKTETIRIPT…CSGAGRVNRE (79 aa)). Zn(2+) contacts are provided by Cys152, Cys155, Cys169, Cys172, Cys191, Cys194, Cys205, and Cys208. 4 CXXCXGXG motif repeats span residues 152–159 (CEACSGTG), 169–176 (CSTCGGYG), 191–198 (CPNCHGRG), and 205–212 (CTACSGAG).

This sequence belongs to the DnaJ family. In terms of assembly, homodimer. Requires Zn(2+) as cofactor.

It is found in the cytoplasm. Functionally, participates actively in the response to hyperosmotic and heat shock by preventing the aggregation of stress-denatured proteins and by disaggregating proteins, also in an autonomous, DnaK-independent fashion. Unfolded proteins bind initially to DnaJ; upon interaction with the DnaJ-bound protein, DnaK hydrolyzes its bound ATP, resulting in the formation of a stable complex. GrpE releases ADP from DnaK; ATP binding to DnaK triggers the release of the substrate protein, thus completing the reaction cycle. Several rounds of ATP-dependent interactions between DnaJ, DnaK and GrpE are required for fully efficient folding. Also involved, together with DnaK and GrpE, in the DNA replication of plasmids through activation of initiation proteins. In Methylorubrum populi (strain ATCC BAA-705 / NCIMB 13946 / BJ001) (Methylobacterium populi), this protein is Chaperone protein DnaJ.